The following is a 549-amino-acid chain: NAC domain-containing protein 53 (549 aa).

The 151-residue stretch at 9–159 folds into the NAC domain; that stretch reads LAPGFRFHPT…AFVLCRIFQK (151 aa). The DNA-binding element occupies 108-165; the sequence is VGMKKTLVYHKGRAPRGERTNWVMHEYRLVDQDLDKTGVHQDAFVLCRIFQKSGSGPK. Positions 395 to 416 are enriched in basic and acidic residues; sequence LEKEETSRSKHVVEEKEKDEAS. Positions 395 to 418 are disordered; sequence LEKEETSRSKHVVEEKEKDEASCS. Residues 526–546 traverse the membrane as a helical segment; that stretch reads LIFMCFWVLLLSVSFKVSILV.

As to expression, expressed in roots, rosette leaves, cauline leaves, shoot apex and stems.

The protein resides in the endoplasmic reticulum membrane. Its subcellular location is the nucleus. Functionally, transcriptional activator activated by proteolytic cleavage through regulated intramembrane proteolysis (RIP). Promotes reactive oxygen species (ROS) production during drought-induced leaf senescence. In response to abscisic acid (ABA)-mediated drought stress signals, binds directly to the promoters of RBOHC and RBOHE genes, encoding ROS biosynthetic enzymes, resulting in ROS accumulation and triggering leaf senescence via programmed cell death (PCD). ROS-induced leaf senescence sustains plant survival under drought conditions. Involved in heat stress response. Modulates PCD through a ROS-mediated positive feedback control under heat stress conditions. This may provide an adaptation strategy for plant survival under extreme heat stress conditions. Acts as a repressor in preventing anther dehiscence during stamen development by suppressing genes that participate in jasmonic acid (JA) biosynthesis, such as DAD1, AOS, AOC3, OPR3 and 4CLL5/OPCL1. This is NAC domain-containing protein 53 from Arabidopsis thaliana (Mouse-ear cress).